The sequence spans 89 residues: Large ribosomal subunit protein bL27 (89 aa).

A disordered region spans residues 1-20; sequence MAHKKAGGSSRNGRDSAGKR.

The protein belongs to the bacterial ribosomal protein bL27 family.

The polypeptide is Large ribosomal subunit protein bL27 (Rhodopseudomonas palustris (strain HaA2)).